A 352-amino-acid polypeptide reads, in one-letter code: Very-long-chain 3-oxoacyl-CoA reductase (352 aa).

Residues 20–40 form a helical membrane-spanning segment; sequence TLWFIFIFGLLKLVPFALRFL. NADP(+) contacts are provided by Val-66, Asp-120, Asn-147, Tyr-228, Lys-232, Val-261, and Ser-263. Residue Tyr-228 is the Proton donor of the active site. Lys-232 (lowers pKa of active site Tyr) is an active-site residue.

It belongs to the short-chain dehydrogenases/reductases (SDR) family.

It is found in the endoplasmic reticulum membrane. It catalyses the reaction a very-long-chain (3R)-3-hydroxyacyl-CoA + NADP(+) = a very-long-chain 3-oxoacyl-CoA + NADPH + H(+). It participates in lipid metabolism; fatty acid biosynthesis. In terms of biological role, component of the microsomal membrane bound fatty acid elongation system, which produces the 26-carbon very long-chain fatty acids (VLCFA) from palmitate. Catalyzes the reduction of the 3-ketoacyl-CoA intermediate that is formed in each cycle of fatty acid elongation. VLCFAs serve as precursors for ceramide and sphingolipids. This Candida glabrata (strain ATCC 2001 / BCRC 20586 / JCM 3761 / NBRC 0622 / NRRL Y-65 / CBS 138) (Yeast) protein is Very-long-chain 3-oxoacyl-CoA reductase.